We begin with the raw amino-acid sequence, 701 residues long: MPSKQIRKQSISVTRGARRRDEDSGTDVGEGTDEWSQSKATVRPPDQLELTDAELKEEFTRILTANNPHAPQNIVRYSFKEGTYKLIGFVNQMAVHFSQVGNLIPKDSDEGRRQHYRDEMVAGSQESIKVVTSEAENLEEEEEPKEGEGEAEAEAEAGSQTDIPAAAETTEKVIEEELMAPVQPKERKLTNQFNFSERASQTFNNPLRDRECQMEPPPRTNFSATANQWEIYDAYVDELEKQEKTKEKEKAKTPVAKKTEKMAMRKLTSMESQSDDITKVTQAAKIVERMVNQNTYDDVAQDFKYYEDTADEYRDQEGTLLPLWKFQNDKAKRLAVTALCWNPKYKDLFAVGHGSYDFMKQSRGMLLLYSMKNPSFPEYMFSSESGIMCLDVHVDHPYLVVVGYYDGNVAIYNLKKPHSQPCFRSTSKSGKHTDPVWQVKWQKDDMDHNLNFFSVSSDGRIVSWTLVKSELVHIDIIKLKTEGSTTEIPEGLQLHTVGCGTAFDFHKEIDYMFLVGTEEGKIYKCSKSYSSQFLDTYDAHNMAVDAVLWNPYHTKVFMSCSSDWTVKIWDHTIKTPMFIYDLNSAVGDVAWAPYSSTVFAAVTTDGKAHVFDLAVNKYEAICNQPVVAKKKNKITHVQFNPIHPIIIVGDDRGHIICLKLSPNLRKMPKEKKGQEVQKGPAVEIAKLDKLLNLVREVKTKT.

2 disordered regions span residues 1-45 (MPSK…VRPP) and 119-165 (EMVA…DIPA). Phosphoserine occurs at positions 124 and 127. The span at 136–155 (ENLEEEEEPKEGEGEAEAEA) shows a compositional bias: acidic residues. WD repeat units lie at residues 382–422 (SSES…SQPC), 431–474 (KHTD…LVHI), 539–579 (AHNM…PMFI), 581–621 (DLNS…YEAI), and 629–668 (KKKNKITHVQFNPIHPIIIVGDDRGHIICLKLSPNLRKMP).

The protein belongs to the dynein intermediate chain family. In terms of assembly, consists of at least two heavy chains and a number of intermediate and light chains. Interacts with BICD2. Interacts with CFAP45 and CFAP52. Interacts with CFAP53.

The protein resides in the cytoplasm. It is found in the cytoskeleton. Its subcellular location is the cilium axoneme. Functionally, part of the dynein complex of respiratory cilia. In Mus musculus (Mouse), this protein is Dynein axonemal intermediate chain 1 (Dnai1).